Here is a 269-residue protein sequence, read N- to C-terminus: Hydroxyethylthiazole kinase (269 aa).

Substrate is bound at residue Met-48. Lys-124 and Thr-170 together coordinate ATP. Gly-197 provides a ligand contact to substrate.

It belongs to the Thz kinase family. Requires Mg(2+) as cofactor.

It catalyses the reaction 5-(2-hydroxyethyl)-4-methylthiazole + ATP = 4-methyl-5-(2-phosphooxyethyl)-thiazole + ADP + H(+). It participates in cofactor biosynthesis; thiamine diphosphate biosynthesis; 4-methyl-5-(2-phosphoethyl)-thiazole from 5-(2-hydroxyethyl)-4-methylthiazole: step 1/1. In terms of biological role, catalyzes the phosphorylation of the hydroxyl group of 4-methyl-5-beta-hydroxyethylthiazole (THZ). The polypeptide is Hydroxyethylthiazole kinase (Clostridium kluyveri (strain NBRC 12016)).